Consider the following 351-residue polypeptide: Terpene cyclase sdgD (351 aa).

9 helical membrane passes run 7–27, 62–82, 89–109, 126–146, 160–180, 193–213, 229–249, 281–301, and 316–336; these read INFIRFTFVILSLLAIYTILI, TGVPVLDIFVKALVTSFWPVI, LSLLGVPAVASMGVSYLLLLL, WVGLLQTNFSQAIILPIYCAI, IPHVTISLILCVYTGMALVAL, VVVAFMVPWALWVFVMVFMAS, IYIFALVIAATTHLGALLASL, FLQWDYLIASVTLFLWAVAVY, and LEVCAISVIISPAAMAVLLIW.

The protein belongs to the membrane-bound ascI terpene cyclase family.

It localises to the membrane. Its pathway is secondary metabolite biosynthesis. Its function is as follows. Epoxide hydrolase; part of the gene cluster that mediates the biosynthesis of the polyenes aspernidgulenes. The carbon backbone of aspernidgulenes is synthesized by the HR-PKS sdgA, which accepts acetyl-CoA as the starter unit and performs malonyl-CoA extensions as well as regioselective methylation and reduction. The resulting nonaketide offloads the HR-PKS by intramolecular lactonization to yield the 5,6-dihydro-alpha-pyrone-containing hexaenoic acids preaspernidgulene A1 and A2. The FAD-dependent monooxygenase sdgC then installs the first epoxide on the penultimate double bond. Subsequently, the FAD-dependent monooxygenase sdgF presumably generates a ketone intermediate through Meinwald rearrangement involving a hydride shift. Next, sdgC introduces another epoxide on the last olefin of the ketone intermediate after E/Z isomerization. The epoxide hydrolase sdgD then catalyzes stereospecific cyclization of the 5,6-dihydro-alpha-pyrone and opening of the epoxide ring to form an oxygenated trimethylcyclopentanone and an oxabicyclo[2.2.1]heptane unit. Finally, the bicyclic unit undergoes hydrolytic cleavage, either spontaneously or catalyzed by sdgD, to assemble the dimethyl-gamma-lactone moiety in aspernidgulene A1. This Emericella nidulans (strain FGSC A4 / ATCC 38163 / CBS 112.46 / NRRL 194 / M139) (Aspergillus nidulans) protein is Terpene cyclase sdgD.